A 134-amino-acid chain; its full sequence is Putative nickel-responsive regulator (134 aa).

Ni(2+) contacts are provided by His-78, His-89, His-91, and Cys-97.

The protein belongs to the transcriptional regulatory CopG/NikR family. Requires Ni(2+) as cofactor.

Its function is as follows. Transcriptional regulator. The polypeptide is Putative nickel-responsive regulator (Chlorobium phaeobacteroides (strain DSM 266 / SMG 266 / 2430)).